The following is a 165-amino-acid chain: Ribosome maturation factor RimM (165 aa).

The 72-residue stretch at Glu94 to Val165 folds into the PRC barrel domain.

It belongs to the RimM family. As to quaternary structure, binds ribosomal protein uS19.

It is found in the cytoplasm. An accessory protein needed during the final step in the assembly of 30S ribosomal subunit, possibly for assembly of the head region. Essential for efficient processing of 16S rRNA. May be needed both before and after RbfA during the maturation of 16S rRNA. It has affinity for free ribosomal 30S subunits but not for 70S ribosomes. This Rickettsia typhi (strain ATCC VR-144 / Wilmington) protein is Ribosome maturation factor RimM.